The chain runs to 77 residues: Conotoxin ArMSGL-0143 (77 aa).

The signal sequence occupies residues 1-22; sequence MSGLGIMLLTLLLLVFMETSHQ. Positions 23–44 are excised as a propeptide; it reads DAGEKQATQRDAINVRRRRSLT. Disulfide bonds link Cys51/Cys63, Cys55/Cys71, and Cys62/Cys75. A Phenylalanine amide modification is found at Phe76.

Belongs to the conotoxin O3 superfamily. In terms of tissue distribution, expressed by the venom duct.

Its subcellular location is the secreted. The protein is Conotoxin ArMSGL-0143 of Conus arenatus (Sand-dusted cone).